Here is a 124-residue protein sequence, read N- to C-terminus: MNLEYVHVVQKFNQVLLELTKKVCTVVGGSKPTYWYHHIRRVCSECPSMPMTMIGPYLNVYKTQILTKDKNFFMNFDPAHNEYTFIIQKLKEAARNMSEEELEQYWVKLLFLLKSYIKCKPFIN.

This sequence belongs to the asfivirus H124R family.

The protein localises to the virion. This is an uncharacterized protein from Ornithodoros (relapsing fever ticks).